The primary structure comprises 362 residues: Peptide chain release factor 1 (362 aa).

Q237 is subject to N5-methylglutamine.

This sequence belongs to the prokaryotic/mitochondrial release factor family. In terms of processing, methylated by PrmC. Methylation increases the termination efficiency of RF1.

Its subcellular location is the cytoplasm. In terms of biological role, peptide chain release factor 1 directs the termination of translation in response to the peptide chain termination codons UAG and UAA. This Vibrio atlanticus (strain LGP32) (Vibrio splendidus (strain Mel32)) protein is Peptide chain release factor 1.